A 318-amino-acid chain; its full sequence is Probable carboxylesterase 1 (318 aa).

At M1 the chain carries N-acetylmethionine. Residues H79 to G81 carry the Involved in the stabilization of the negatively charged intermediate by the formation of the oxyanion hole motif. Catalysis depends on residues S163, D258, and H290.

It belongs to the 'GDXG' lipolytic enzyme family. As to expression, expressed in roots, stems, flowers and siliques.

It carries out the reaction a carboxylic ester + H2O = an alcohol + a carboxylate + H(+). Its function is as follows. Carboxylesterase acting on esters with varying acyl chain length. This chain is Probable carboxylesterase 1 (CXE1), found in Arabidopsis thaliana (Mouse-ear cress).